We begin with the raw amino-acid sequence, 407 residues long: snRNA-activating protein complex subunit 3 (407 aa).

Over residues Met1 to Gly12 the composition is skewed to gly residues. A disordered region spans residues Met1–Pro26.

It belongs to the SNAPC3/SRD2 family. Part of the SNAPc complex composed of 5 subunits: SNAPC1, SNAPC2, SNAPC3, SNAPC4 and SNAPC5. SNAPC3 interacts with SNAPC1.

It localises to the nucleus. In terms of biological role, part of the SNAPc complex required for the transcription of both RNA polymerase II and III small-nuclear RNA genes. Binds to the proximal sequence element (PSE), a non-TATA-box basal promoter element common to these 2 types of genes. Recruits TBP and BRF2 to the U6 snRNA TATA box. In Rattus norvegicus (Rat), this protein is snRNA-activating protein complex subunit 3 (Snapc3).